Here is a 465-residue protein sequence, read N- to C-terminus: Glutamate--tRNA ligase (465 aa).

A 'HIGH' region motif is present at residues 8–18; sequence PSPTGYLHIGG. Residues 236-240 carry the 'KMSKS' region motif; it reads RLSKR. Lys-239 serves as a coordination point for ATP.

Belongs to the class-I aminoacyl-tRNA synthetase family. Glutamate--tRNA ligase type 1 subfamily. In terms of assembly, monomer.

It localises to the cytoplasm. The enzyme catalyses tRNA(Glu) + L-glutamate + ATP = L-glutamyl-tRNA(Glu) + AMP + diphosphate. Its function is as follows. Catalyzes the attachment of glutamate to tRNA(Glu) in a two-step reaction: glutamate is first activated by ATP to form Glu-AMP and then transferred to the acceptor end of tRNA(Glu). In Nitrosospira multiformis (strain ATCC 25196 / NCIMB 11849 / C 71), this protein is Glutamate--tRNA ligase.